We begin with the raw amino-acid sequence, 124 residues long: UPF0212 protein Hlac_0869 (124 aa).

The protein belongs to the UPF0212 family.

The chain is UPF0212 protein Hlac_0869 from Halorubrum lacusprofundi (strain ATCC 49239 / DSM 5036 / JCM 8891 / ACAM 34).